We begin with the raw amino-acid sequence, 633 residues long: GTPase-GDP dissociation stimulator BEM4 (633 aa).

Interacts with CDC42; the interaction is direct. Interacts with RHO1; the interaction is direct. Interacts with RHO2. Interacts with RHO4. Interacts with CDC11.

It localises to the nucleus. Its subcellular location is the cytoplasm. Functionally, probably acts as a GEF (guanine nucleotide exchange factor) for the Rho family of small GTP-binding proteins (G proteins) that stimulates the dissociation of GDP to enable subsequent binding of GTP. May also chaperone the processing and/or trafficking of small GTPases independently of GEF activity. Involved in the control of polarized cell growth via CDC42-mediated signaling. Involved in the control of cell-wall organization via RHO1-mediated signaling. May also function via RHO2 and RHO4. The protein is GTPase-GDP dissociation stimulator BEM4 of Saccharomyces cerevisiae (strain ATCC 204508 / S288c) (Baker's yeast).